Reading from the N-terminus, the 359-residue chain is Molybdenum import ATP-binding protein ModC (359 aa).

The ABC transporter domain occupies 1-229 (MLELNFSQQL…SALRPWLQRE (229 aa)). 31–38 (GLSGAGKT) lines the ATP pocket. Positions 289–354 (SSSIRNILPV…IKSVSFNRQN (66 aa)) constitute a Mop domain.

Belongs to the ABC transporter superfamily. Molybdate importer (TC 3.A.1.8) family. The complex is composed of two ATP-binding proteins (ModC), two transmembrane proteins (ModB) and a solute-binding protein (ModA).

It is found in the cell inner membrane. It catalyses the reaction molybdate(out) + ATP + H2O = molybdate(in) + ADP + phosphate + H(+). Part of the ABC transporter complex ModABC involved in molybdenum import. Responsible for energy coupling to the transport system. This Yersinia pseudotuberculosis serotype I (strain IP32953) protein is Molybdenum import ATP-binding protein ModC.